A 494-amino-acid chain; its full sequence is Ell-associated factor Eaf (494 aa).

The span at 119 to 138 (KTRSEVTNKPSLMSATNAPM) shows a compositional bias: polar residues. Disordered stretches follow at residues 119-212 (KTRS…PAWH) and 243-494 (QANI…DDDD). The segment covering 139 to 156 (SNGAPVPSSAAAGTGSAG) has biased composition (low complexity). Residues 159 to 178 (ENSTMRISSKTKVSTGSRRN) show a composition bias toward polar residues. The residue at position 188 (Ser-188) is a Phosphoserine. Composition is skewed to polar residues over residues 243–256 (QANI…SSAG) and 280–306 (QQLT…NNYA). Residues 307–319 (QQQQQQQQQQLQQ) show a composition bias toward low complexity. A compositionally biased stretch (polar residues) spans 320-332 (RASFSHSNHSNSM). The span at 344-373 (QTAQSMAQAAAALEQQIGGELSASSSSSES) shows a compositional bias: low complexity. A compositionally biased stretch (acidic residues) spans 374–389 (DSSDSDSGSDSDDSTE). The span at 414-424 (HQQQQHMHQLP) shows a compositional bias: low complexity. Positions 437 to 454 (SHHHHQQQQQSHHHHHHQ) are enriched in basic residues. 2 stretches are compositionally biased toward low complexity: residues 455–464 (QQQQQQHQQS) and 475–488 (NDLL…SSNS).

The protein belongs to the EAF family.

The protein localises to the nucleus. Its function is as follows. Promotes transcriptional elongation by Su(Tpl)/ELL. Essential for development. In Drosophila virilis (Fruit fly), this protein is Ell-associated factor Eaf.